Here is a 466-residue protein sequence, read N- to C-terminus: Asparagine--tRNA ligase (466 aa).

It belongs to the class-II aminoacyl-tRNA synthetase family. As to quaternary structure, homodimer.

It localises to the cytoplasm. The enzyme catalyses tRNA(Asn) + L-asparagine + ATP = L-asparaginyl-tRNA(Asn) + AMP + diphosphate + H(+). This is Asparagine--tRNA ligase from Aeromonas hydrophila subsp. hydrophila (strain ATCC 7966 / DSM 30187 / BCRC 13018 / CCUG 14551 / JCM 1027 / KCTC 2358 / NCIMB 9240 / NCTC 8049).